The chain runs to 174 residues: Protein-lysine myristoyltransferase HlyC (174 aa).

Active-site residues include His23 and Asp92. His151 provides a ligand contact to heme.

This sequence belongs to the RTX toxin acyltransferase family. In terms of assembly, monomer. Proteolytically cleaved by the protease systems ClpAP, ClpXP and FtsH, leading to its degradation.

It localises to the cytoplasm. The enzyme catalyses tetradecanoyl-[ACP] + L-lysyl-[protein] = N(6)-tetradecanoyl-L-lysyl-[protein] + holo-[ACP] + H(+). Its activity is regulated as follows. The acyltransferase activity is inhibited by heme. Protein-lysine myristoyltransferase that catalyzes myristoylation of the protoxin (HlyA) at two internal lysine residues, thereby converting it to the active toxin. This is Protein-lysine myristoyltransferase HlyC from Escherichia coli.